The following is a 77-amino-acid chain: Liver-expressed antimicrobial peptide 2 (77 aa).

An N-terminal signal peptide occupies residues 1-22 (MWHLKLFAVLMICLLLLAQVDG). Residues 23–37 (SPIPQQSSAKRRPRR) constitute a propeptide that is removed on maturation. Disulfide bonds link cysteine 54/cysteine 65 and cysteine 60/cysteine 70.

Belongs to the LEAP2 family.

It localises to the secreted. Has an antimicrobial activity. The sequence is that of Liver-expressed antimicrobial peptide 2 (LEAP2) from Bos taurus (Bovine).